A 362-amino-acid chain; its full sequence is Ribosome-binding ATPase YchF (362 aa).

Residues 3-255 (FKCGIIGLPN…MSDEEKKSFM (253 aa)) enclose the OBG-type G domain. Residue 12 to 17 (NVGKST) coordinates ATP. The Mg(2+) site is built by Ser-16 and Thr-36. The TGS domain occupies 277-360 (NLITFFTVGD…QDGDIIHFLF (84 aa)).

The protein belongs to the TRAFAC class OBG-HflX-like GTPase superfamily. OBG GTPase family. YchF/OLA1 subfamily. The cofactor is Mg(2+).

In terms of biological role, ATPase that binds to both the 70S ribosome and the 50S ribosomal subunit in a nucleotide-independent manner. The sequence is that of Ribosome-binding ATPase YchF from Buchnera aphidicola subsp. Acyrthosiphon pisum (strain APS) (Acyrthosiphon pisum symbiotic bacterium).